The following is an 84-amino-acid chain: Exodeoxyribonuclease 7 small subunit (84 aa).

Belongs to the XseB family. In terms of assembly, heterooligomer composed of large and small subunits.

It localises to the cytoplasm. The catalysed reaction is Exonucleolytic cleavage in either 5'- to 3'- or 3'- to 5'-direction to yield nucleoside 5'-phosphates.. Its function is as follows. Bidirectionally degrades single-stranded DNA into large acid-insoluble oligonucleotides, which are then degraded further into small acid-soluble oligonucleotides. This chain is Exodeoxyribonuclease 7 small subunit, found in Yersinia pseudotuberculosis serotype O:1b (strain IP 31758).